Here is a 148-residue protein sequence, read N- to C-terminus: Ubiquitin-conjugating enzyme E2 28 (148 aa).

Positions 1 to 147 (MASKRILKEL…ARSWTQKYAM (147 aa)) constitute a UBC core domain. Catalysis depends on cysteine 85, which acts as the Glycyl thioester intermediate.

This sequence belongs to the ubiquitin-conjugating enzyme family. In terms of assembly, interacts with SINAT5. Expressed in seeds, pistils, siliques, hypocotyls and leaves.

The catalysed reaction is S-ubiquitinyl-[E1 ubiquitin-activating enzyme]-L-cysteine + [E2 ubiquitin-conjugating enzyme]-L-cysteine = [E1 ubiquitin-activating enzyme]-L-cysteine + S-ubiquitinyl-[E2 ubiquitin-conjugating enzyme]-L-cysteine.. It participates in protein modification; protein ubiquitination. Accepts the ubiquitin from the E1 complex and catalyzes its covalent attachment to other proteins. This is Ubiquitin-conjugating enzyme E2 28 from Arabidopsis thaliana (Mouse-ear cress).